A 65-amino-acid polypeptide reads, in one-letter code: Photosystem II reaction center protein Z (65 aa).

2 helical membrane passes run 11–31 and 44–64; these read LVLA…VIFA and WLAC…DGIF.

Belongs to the PsbZ family. As to quaternary structure, PSII is composed of 1 copy each of membrane proteins PsbA, PsbB, PsbC, PsbD, PsbE, PsbF, PsbH, PsbI, PsbJ, PsbK, PsbL, PsbM, PsbT, PsbY, PsbZ, Psb30/Ycf12, at least 3 peripheral proteins of the oxygen-evolving complex and a large number of cofactors. It forms dimeric complexes.

The protein resides in the plastid. It localises to the chloroplast thylakoid membrane. Its function is as follows. May control the interaction of photosystem II (PSII) cores with the light-harvesting antenna, regulates electron flow through the 2 photosystem reaction centers. PSII is a light-driven water plastoquinone oxidoreductase, using light energy to abstract electrons from H(2)O, generating a proton gradient subsequently used for ATP formation. The protein is Photosystem II reaction center protein Z of Euglena gracilis.